A 346-amino-acid polypeptide reads, in one-letter code: Phosphoribosylformylglycinamidine cyclo-ligase (346 aa).

Belongs to the AIR synthase family.

The protein resides in the cytoplasm. The enzyme catalyses 2-formamido-N(1)-(5-O-phospho-beta-D-ribosyl)acetamidine + ATP = 5-amino-1-(5-phospho-beta-D-ribosyl)imidazole + ADP + phosphate + H(+). The protein operates within purine metabolism; IMP biosynthesis via de novo pathway; 5-amino-1-(5-phospho-D-ribosyl)imidazole from N(2)-formyl-N(1)-(5-phospho-D-ribosyl)glycinamide: step 2/2. This is Phosphoribosylformylglycinamidine cyclo-ligase from Bacillus cereus (strain ZK / E33L).